The sequence spans 431 residues: Glutamate-1-semialdehyde 2,1-aminomutase (431 aa).

Lysine 269 carries the N6-(pyridoxal phosphate)lysine modification.

This sequence belongs to the class-III pyridoxal-phosphate-dependent aminotransferase family. HemL subfamily. In terms of assembly, homodimer. Pyridoxal 5'-phosphate serves as cofactor.

It localises to the cytoplasm. It catalyses the reaction (S)-4-amino-5-oxopentanoate = 5-aminolevulinate. The protein operates within porphyrin-containing compound metabolism; protoporphyrin-IX biosynthesis; 5-aminolevulinate from L-glutamyl-tRNA(Glu): step 2/2. Its pathway is porphyrin-containing compound metabolism; chlorophyll biosynthesis. In Chlorobium luteolum (strain DSM 273 / BCRC 81028 / 2530) (Pelodictyon luteolum), this protein is Glutamate-1-semialdehyde 2,1-aminomutase.